A 320-amino-acid polypeptide reads, in one-letter code: tRNA uridine(34) hydroxylase (320 aa).

The 95-residue stretch at 123–217 folds into the Rhodanese domain; the sequence is EDEDTVILDA…YGKDPETKGQ (95 aa). Residue Cys-177 is the Cysteine persulfide intermediate of the active site.

Belongs to the TrhO family.

The enzyme catalyses uridine(34) in tRNA + AH2 + O2 = 5-hydroxyuridine(34) in tRNA + A + H2O. In terms of biological role, catalyzes oxygen-dependent 5-hydroxyuridine (ho5U) modification at position 34 in tRNAs. The chain is tRNA uridine(34) hydroxylase from Staphylococcus haemolyticus (strain JCSC1435).